Consider the following 559-residue polypeptide: Formate--tetrahydrofolate ligase (559 aa).

An ATP-binding site is contributed by 68–75; that stretch reads TPAGEGKT.

Belongs to the formate--tetrahydrofolate ligase family.

It carries out the reaction (6S)-5,6,7,8-tetrahydrofolate + formate + ATP = (6R)-10-formyltetrahydrofolate + ADP + phosphate. It participates in one-carbon metabolism; tetrahydrofolate interconversion. The sequence is that of Formate--tetrahydrofolate ligase from Sinorhizobium fredii (strain NBRC 101917 / NGR234).